The sequence spans 38 residues: Conotoxin r7a (38 aa).

The propeptide occupies 1 to 5 (APAKR). Position 6 is a 6'-bromotryptophan (Trp6). A 4-carboxyglutamate mark is found at Glu10 and Glu11. 3 cysteine pairs are disulfide-bonded: Cys12-Cys26, Cys19-Cys30, and Cys25-Cys35. Trp15 is modified (6'-bromotryptophan). Residues Glu20 and Glu31 each carry the 4-carboxyglutamate modification. Trp38 is subject to 6'-bromotryptophan.

The protein belongs to the conotoxin O2 superfamily. Expressed by the venom duct.

It is found in the secreted. In terms of biological role, induces a sleep-like state in mice. This chain is Conotoxin r7a, found in Conus radiatus (Rayed cone).